Here is a 285-residue protein sequence, read N- to C-terminus: Bifunctional protein FolD (285 aa).

Residues 165–167 (GAS) and Ser-190 contribute to the NADP(+) site.

Belongs to the tetrahydrofolate dehydrogenase/cyclohydrolase family. Homodimer.

The catalysed reaction is (6R)-5,10-methylene-5,6,7,8-tetrahydrofolate + NADP(+) = (6R)-5,10-methenyltetrahydrofolate + NADPH. It catalyses the reaction (6R)-5,10-methenyltetrahydrofolate + H2O = (6R)-10-formyltetrahydrofolate + H(+). It participates in one-carbon metabolism; tetrahydrofolate interconversion. Functionally, catalyzes the oxidation of 5,10-methylenetetrahydrofolate to 5,10-methenyltetrahydrofolate and then the hydrolysis of 5,10-methenyltetrahydrofolate to 10-formyltetrahydrofolate. This is Bifunctional protein FolD from Cupriavidus metallidurans (strain ATCC 43123 / DSM 2839 / NBRC 102507 / CH34) (Ralstonia metallidurans).